A 557-amino-acid chain; its full sequence is MDLMNGQASNVNIAATASEKSSSSESLSDKGSELKKSFDAVVFDVLKVTPEEYAGQITLMDVPVFKAIQPDELSSCGWNKKEKYSSAPNAVAFTRRFNHVSFWVVREILHAQTLKIRAEVLSHYIKTAKKLYELNNLHALMAVVSGLQSAPIFRLTKTWALLSRKDKTTFEKLEYVMSKEDNYKRLRDYISSLKMTPCIPYLGIYLSDLTYIDSAYPSTGSILENEQRSNLMNNILRIISDLQQSCEYDIPMLPHVQKYLNSVQYIEELQKFVEDDNYKLSLKIEPGTSTPRSAASREDLVGPEVGASPQSGRKSVAAEGALLPQTPPSPRNLIPHGHRKCHSLGYNFIHKMNTAEFKSATFPNAGPRHLLDDSVMEPHAPSRGQAESSTLSSGISIGSSDGSELSEETSWPAFESSAESEDLAVHLYPGAVTIQGVLRRKTLLKEGKKPTVASWTKYWAALCGTQLFYYAAKSLKATERKHFKSTSNKNVSVVGWMVMMADDPEHPDLFLLTDSEKGNSYKFQAGNRMNAMLWFKHLSAACQSNKQQVPTNLMTFE.

Residues 49–287 (TPEEYAGQIT…YKLSLKIEPG (239 aa)) enclose the Ras-GEF domain. A disordered region spans residues 283-314 (KIEPGTSTPRSAASREDLVGPEVGASPQSGRK). Phosphoserine is present on residues serine 293, serine 296, serine 308, and serine 311. A Phosphothreonine modification is found at threonine 326. Residues 327 to 330 (PPSP) carry the PXXP motif. Residues serine 329 and serine 343 each carry the phosphoserine modification. At threonine 361 the chain carries Phosphothreonine. The tract at residues 368–409 (RHLLDDSVMEPHAPSRGQAESSTLSSGISIGSSDGSELSEET) is disordered. Phosphoserine is present on serine 374. A compositionally biased stretch (low complexity) spans 387 to 403 (ESSTLSSGISIGSSDGS). Residues 431 to 543 (AVTIQGVLRR…WFKHLSAACQ (113 aa)) form the PH domain. Positions 433 to 557 (TIQGVLRRKT…QVPTNLMTFE (125 aa)) are required for stimulation of nucleotide exchange by RALA.

In terms of assembly, interacts with the SH3 domains of GRB2 and PLCG1. Interacts with RALA.

It is found in the cytoplasm. It localises to the cell membrane. In terms of biological role, guanine nucleotide exchange factor for the small GTPase RALA. May be involved in cytoskeletal organization. May also be involved in the stimulation of transcription in a Ras-independent fashion. In Macaca fascicularis (Crab-eating macaque), this protein is Ras-specific guanine nucleotide-releasing factor RalGPS2 (RALGPS2).